Consider the following 223-residue polypeptide: Small ribosomal subunit protein uS3 (223 aa).

In terms of domain architecture, KH type-2 spans 39–115 (IRKYIEKNLA…RVFINIVEIK (77 aa)).

This sequence belongs to the universal ribosomal protein uS3 family. Part of the 30S ribosomal subunit. Forms a tight complex with proteins S10 and S14.

In terms of biological role, binds the lower part of the 30S subunit head. Binds mRNA in the 70S ribosome, positioning it for translation. This is Small ribosomal subunit protein uS3 from Leuconostoc citreum (strain KM20).